We begin with the raw amino-acid sequence, 501 residues long: Glycerol kinase (501 aa).

Residue Thr11 coordinates ADP. ATP is bound by residues Thr11, Thr12, and Ser13. Thr11 provides a ligand contact to sn-glycerol 3-phosphate. Arg15 provides a ligand contact to ADP. Sn-glycerol 3-phosphate is bound by residues Arg81, Glu82, Tyr133, and Asp242. Arg81, Glu82, Tyr133, Asp242, and Gln243 together coordinate glycerol. Thr264 and Gly307 together coordinate ADP. ATP-binding residues include Thr264, Gly307, Gln311, and Gly409. ADP is bound by residues Gly409 and Asn413.

The protein belongs to the FGGY kinase family.

It catalyses the reaction glycerol + ATP = sn-glycerol 3-phosphate + ADP + H(+). It functions in the pathway polyol metabolism; glycerol degradation via glycerol kinase pathway; sn-glycerol 3-phosphate from glycerol: step 1/1. Its activity is regulated as follows. Inhibited by fructose 1,6-bisphosphate (FBP). Key enzyme in the regulation of glycerol uptake and metabolism. Catalyzes the phosphorylation of glycerol to yield sn-glycerol 3-phosphate. In Borrelia garinii subsp. bavariensis (strain ATCC BAA-2496 / DSM 23469 / PBi) (Borreliella bavariensis), this protein is Glycerol kinase.